A 126-amino-acid polypeptide reads, in one-letter code: Protein Wnt-1 (126 aa).

S1 carries O-palmitoleoyl serine; by PORCN lipidation. C92 and C107 are joined by a disulfide. N-linked (GlcNAc...) asparagine glycosylation is found at N93 and N123.

Belongs to the Wnt family. In terms of processing, palmitoleoylation is required for efficient binding to frizzled receptors. Palmitoleoylation is necessary for proper trafficking to cell surface. Depalmitoleoylated by NOTUM, leading to inhibit Wnt signaling pathway.

Its subcellular location is the secreted. It localises to the extracellular space. It is found in the extracellular matrix. Ligand for members of the frizzled family of seven transmembrane receptors. Acts in the canonical Wnt signaling pathway by promoting beta-catenin-dependent transcriptional activation. Plays an essential role in the development of the embryonic brain and central nervous system (CNS). Has a role in osteoblast function, bone development and bone homeostasis. The polypeptide is Protein Wnt-1 (WNT-1) (Plestiodon skiltonianus (Western skink)).